A 364-amino-acid polypeptide reads, in one-letter code: Envelope glycoprotein US27 (364 aa).

Topologically, residues 1 to 36 (MTTSTTTTTNIMLQVSNVTNHTLNSTEIYQLFEYTR) are virion surface. N-linked (GlcNAc...) asparagine; by host glycosylation is found at Asn-17, Asn-20, and Asn-24. Residues 37–57 (FGVWLMCIVGTFLNMLVITTI) traverse the membrane as a helical segment. At 58-69 (LYYRRKKKSPSD) the chain is on the intravirion side. Residues 70–90 (TYICNLAVADLLIVVGLPFFL) traverse the membrane as a helical segment. The Virion surface segment spans residues 91 to 103 (EYAKHHPKLSREV). Residues 104-124 (VCSGLNACFYICLFAGVCFLI) form a helical membrane-spanning segment. Residues 125–150 (NLSMDRYCVIVWGVELNRVRNNKRAT) are Intravirion-facing. Residues 151–171 (CWVVIFWILAALMGMPHYLMY) traverse the membrane as a helical segment. Over 172–188 (SHTNNECVGEFANETSG) the chain is Virion surface. A helical transmembrane segment spans residues 189-209 (WFPVFLNTKVNICGYLAPIVL). Topologically, residues 210 to 234 (MAYTYNRMVRFIINYVGKWHMQTLH) are intravirion. The chain crosses the membrane as a helical span at residues 235-255 (VLLVVVVSFASFWFPFNLALF). Residues 256 to 279 (LESIRLLSGTQNETLQTVITFCLY) are Virion surface-facing. Residues 280-300 (VGQFLAYVRACLNPGIYILVG) form a helical membrane-spanning segment. Topologically, residues 301–364 (TQMRKDMWTT…MESGEEEFLL (64 aa)) are intravirion. The segment at 344-364 (KRTHYDRKHAPMESGEEEFLL) is disordered.

This sequence belongs to the G-protein coupled receptor 1 family. Heterodimerizes with US28.

The protein localises to the virion. It localises to the host cell membrane. Plays an important role in spread of HCMV via the extracellular route. As a G-protein-coupled receptor (vGPCR), may activate signaling pathways important for virion assembly or egress processes. This Homo sapiens (Human) protein is Envelope glycoprotein US27 (US27).